The following is a 487-amino-acid chain: DNA ligase (487 aa).

Catalysis depends on Lys159, which acts as the N6-AMP-lysine intermediate. 3 residues coordinate ATP: Arg164, Arg182, and Glu217. Glu217 is a binding site for a divalent metal cation. The interaction with the sliding clamp stretch occupies residues 229-237 (EGLDFLFDA). Glu344 contributes to the a divalent metal cation binding site. Arg359 and Lys365 together coordinate ATP.

The protein belongs to the ATP-dependent DNA ligase family. In terms of assembly, interacts with the sliding clamp. The cofactor is a divalent metal cation.

It catalyses the reaction ATP + (deoxyribonucleotide)n-3'-hydroxyl + 5'-phospho-(deoxyribonucleotide)m = (deoxyribonucleotide)n+m + AMP + diphosphate.. Functionally, DNA ligase, which is expressed in the early stage of lytic development, has been implicated in T4 DNA synthesis and genetic recombination. It may also play a role in T4 DNA repair. The protein is DNA ligase (30) of Enterobacteria phage T4 (Bacteriophage T4).